The sequence spans 696 residues: Neurogenic protein big brain (696 aa).

At 1–71 (MADESLHTVP…LEFWRSIISE (71 aa)) the chain is on the cytoplasmic side. Ser-46 is subject to Phosphoserine. At Thr-47 the chain carries Phosphothreonine. Residues 72–93 (CLASFMYVFIVCGAAAGVGVGA) form a helical membrane-spanning segment. Topologically, residues 94–97 (SVSS) are extracellular. The helical transmembrane segment at 98 to 118 (VLLATALASGLAMATLTQCFL) threads the bilayer. At 119–143 (HISGAHINPAVTLALCVVRSISPIR) the chain is on the cytoplasmic side. An NPA 1 motif is present at residues 126 to 128 (NPA). Residues 144–167 (AAMYITAQCGGGIAGAALLYGVTV) traverse the membrane as a helical segment. Over 168 to 189 (PGYQGNLQAAISHSAALAAWER) the chain is Extracellular. Residues 190–208 (FGVEFILTFLVVLCYFVST) traverse the membrane as a helical segment. Over 209 to 213 (DPMKK) the chain is Cytoplasmic. The helical transmembrane segment at 214–234 (FMGNSAASIGCAYSACCFVSM) threads the bilayer. The Extracellular portion of the chain corresponds to 235–256 (PYLNPARSLGPSFVLNKWDSHW). The NPA 2 motif lies at 238–240 (NPA). The helical transmembrane segment at 257 to 273 (VYWFGPLVGGMASGLVY) threads the bilayer. A Phosphotyrosine; by Src modification is found at Tyr-273. Residues 274–696 (EYIFNSRNRN…HYGMLPLRPN (423 aa)) lie on the Cytoplasmic side of the membrane. A Phosphoserine modification is found at Ser-300. A disordered region spans residues 314-345 (NKYQQSQGTYPRGQSNGNGGGQAAGNGQHQAA). Tyr-367 carries the post-translational modification Phosphotyrosine; by Abl. Tyr-384 is modified (phosphotyrosine; by Src). At Ser-394 the chain carries Phosphoserine. 2 disordered regions span residues 436–634 (MRTQ…KVSA) and 650–696 (TSQG…LRPN). Low complexity-rich tracts occupy residues 439–451 (QQQQ…QQQQ) and 462–472 (QNQNVQNQMQQ). Tyr-478 is modified (phosphotyrosine; by Src). Low complexity predominate over residues 487-532 (QQQPIQQQQQQQQQQQLQQQQPNMGVQQQQMQPPPQMMSDPQQQPQ). The span at 549 to 558 (GNHKYDRRDP) shows a compositional bias: basic and acidic residues. Residue Ser-576 is modified to Phosphoserine. The segment covering 576–587 (SDDSSYGSYHGS) has biased composition (low complexity). A compositionally biased stretch (pro residues) spans 599–616 (EPSPPPPPMLMYAPPPQP). A Phosphotyrosine; by Abl modification is found at Tyr-610. The segment covering 659–686 (QQQQQQQQQQQQQQQQQQQQMMMQQQQQ) has biased composition (low complexity).

This sequence belongs to the MIP/aquaporin (TC 1.A.8) family. Post-translationally, phosphorylated at its C-terminus. In terms of tissue distribution, detected in all tissues with neurogenic abilities, for example the neurogenic ectoderm.

It localises to the membrane. Functionally, essential for proper differentiation of ectoderm. Acts synergistically with neurogenic locus proteins Notch and Delta during the separation of neural and epidermal cell lineages in response to the lateral inhibition signal. Voltage-insensitive monovalent cation channel. Ion transport is blocked by the presence of divalent cations. The sequence is that of Neurogenic protein big brain (bib) from Drosophila melanogaster (Fruit fly).